The primary structure comprises 448 residues: Trigger factor (448 aa).

The PPIase FKBP-type domain occupies 167–253; sequence GSIVRVDFVE…VKDIKRRDIP (87 aa).

This sequence belongs to the FKBP-type PPIase family. Tig subfamily.

It is found in the cytoplasm. The enzyme catalyses [protein]-peptidylproline (omega=180) = [protein]-peptidylproline (omega=0). Involved in protein export. Acts as a chaperone by maintaining the newly synthesized protein in an open conformation. Functions as a peptidyl-prolyl cis-trans isomerase. The sequence is that of Trigger factor from Borrelia duttonii (strain Ly).